Here is a 221-residue protein sequence, read N- to C-terminus: MENNDELMPREKLLAFGAKALSDYELLAIFLRTGIKDCPVMSLSKNVLTHFGSLHALLSADKKAFCSVKGLGITQFIQLQAITEMTKRYLKQEMLSTPIINDLETVKLFLLTELQHEEREVFMVLFLDNQHRLIKKERLFLGTINVSAVYPREIIKEALYCNAAALILAHNHPSGITEPSYSDQLITKKIQDAAELMEIRVLDHLIVGKSDCYSFAENCLL.

Positions P98–L221 constitute an MPN domain. Zn(2+)-binding residues include H170, H172, and D183. The short motif at H170–D183 is the JAMM motif element.

The protein belongs to the UPF0758 family.

This Haemophilus influenzae (strain 86-028NP) protein is UPF0758 protein NTHI1125.